The sequence spans 244 residues: Ribosomal RNA large subunit methyltransferase E (244 aa).

5 residues coordinate S-adenosyl-L-methionine: G81, W83, D109, D125, and D149. The active-site Proton acceptor is K189.

The protein belongs to the class I-like SAM-binding methyltransferase superfamily. RNA methyltransferase RlmE family.

The protein localises to the cytoplasm. The enzyme catalyses uridine(2552) in 23S rRNA + S-adenosyl-L-methionine = 2'-O-methyluridine(2552) in 23S rRNA + S-adenosyl-L-homocysteine + H(+). Its function is as follows. Specifically methylates the uridine in position 2552 of 23S rRNA at the 2'-O position of the ribose in the fully assembled 50S ribosomal subunit. This chain is Ribosomal RNA large subunit methyltransferase E, found in Cereibacter sphaeroides (strain ATCC 17029 / ATH 2.4.9) (Rhodobacter sphaeroides).